We begin with the raw amino-acid sequence, 270 residues long: tRNA pseudouridine synthase A (270 aa).

Asp-52 (nucleophile) is an active-site residue. Tyr-110 lines the substrate pocket.

The protein belongs to the tRNA pseudouridine synthase TruA family. Homodimer.

The enzyme catalyses uridine(38/39/40) in tRNA = pseudouridine(38/39/40) in tRNA. Formation of pseudouridine at positions 38, 39 and 40 in the anticodon stem and loop of transfer RNAs. This is tRNA pseudouridine synthase A from Paraburkholderia phytofirmans (strain DSM 17436 / LMG 22146 / PsJN) (Burkholderia phytofirmans).